We begin with the raw amino-acid sequence, 532 residues long: MEKSNETNGYLDSAQAGPAAGPGAPGTAAGRARRCAGFLRRQALVLLTVSGVLAGAGLGAALRGLSLSRTQVTYLAFPGEMLLRMLRMIILPLVVCSLVSGAASLDASCLGRLGGIAVAYFGLTTLSASALAVALAFIIKPGSGAQTLQSSDLGLEDSGPPPVPKETVDSFLDLARNLFPSNLVVAAFRTYATDYKVVTQNSSSGNVTHEKIPIGTEIEGMNILGLVLFALVLGVALKKLGSEGEDLIRFFNSLNEATMVLVSWIMWYVPVGIMFLVGSKIVEMKDIIVLVTSLGKYIFASILGHVIHGGIVLPLIYFVFTRKNPFRFLLGLLAPFATAFATCSSSATLPSMMKCIEENNGVDKRISRFILPIGATVNMDGAAIFQCVAAVFIAQLNNVELNAGQIFTILVTATASSVGAAGVPAGGVLTIAIILEAIGLPTHDLPLILAVDWIVDRTTTVVNVEGDALGAGILHHLNQKATKKGEQELAEVKVEAIPNCKSEEETSPLVTHQNPAGPVASAPELESKESVL.

An N-acetylmethionine modification is found at M1. Over residues 1 to 10 the composition is skewed to polar residues; it reads MEKSNETNGY. Residues 1–25 are disordered; sequence MEKSNETNGYLDSAQAGPAAGPGAP. Over 1-41 the chain is Cytoplasmic; that stretch reads MEKSNETNGYLDSAQAGPAAGPGAPGTAAGRARRCAGFLRR. A compositionally biased stretch (low complexity) spans 14–25; that stretch reads AQAGPAAGPGAP. The next 3 helical transmembrane spans lie at 42-62, 88-108, and 119-139; these read QALV…GAAL, MIIL…LDAS, and AYFG…AFII. Residues 140–216 are Extracellular-facing; the sequence is KPGSGAQTLQ…VTHEKIPIGT (77 aa). N201 and N206 each carry an N-linked (GlcNAc...) asparagine glycan. Transmembrane regions (helical) follow at residues 217 to 237, 257 to 277, 298 to 318, 328 to 348, 373 to 393, and 418 to 438; these read EIEG…GVAL, ATMV…MFLV, IFAS…LIYF, FLLG…SSAT, IGAT…AVFI, and VGAA…LEAI. Residues 500–532 are disordered; it reads CKSEEETSPLVTHQNPAGPVASAPELESKESVL. Residues S507, S527, and S530 each carry the phosphoserine modification.

Belongs to the dicarboxylate/amino acid:cation symporter (DAACS) (TC 2.A.23) family. SLC1A4 subfamily. As to expression, expressed mostly in brain, muscle, and pancreas but detected in all tissues examined.

It localises to the membrane. It is found in the melanosome. The enzyme catalyses L-threonine(in) + Na(+)(in) = L-threonine(out) + Na(+)(out). It carries out the reaction L-serine(in) + Na(+)(in) = L-serine(out) + Na(+)(out). It catalyses the reaction L-cysteine(in) + Na(+)(in) = L-cysteine(out) + Na(+)(out). The catalysed reaction is L-alanine(in) + Na(+)(in) = L-alanine(out) + Na(+)(out). The enzyme catalyses L-proline(in) + Na(+)(in) = L-proline(out) + Na(+)(out). It carries out the reaction 4-hydroxy-L-proline(in) + Na(+)(in) = 4-hydroxy-L-proline(out) + Na(+)(out). In terms of biological role, sodium-dependent neutral amino-acid transporter that mediates transport of alanine, serine, cysteine, proline, hydroxyproline and threonine. In Homo sapiens (Human), this protein is Neutral amino acid transporter A.